We begin with the raw amino-acid sequence, 200 residues long: MIKLIVGLGNPGAEYTATRHNAGFWLVDQLAREAGTTLRDERRFHGFYAKARLHGEEVHLLEPQTYMNRSGQSVVALAQFFKILPDEILVAHDELDMPPGSVKLKLGGGSGGHNGLKDITAHLSSQQYWRLRIGIGHPRDLIPESARAGARPDVANYVLKPPRREEQDVIDASIERALAVMPQVIKGELERAMMQLHRNP.

Tyr-15 contributes to the tRNA binding site. His-20 serves as the catalytic Proton acceptor. Tyr-66, Asn-68, and Asn-114 together coordinate tRNA.

This sequence belongs to the PTH family. In terms of assembly, monomer.

It localises to the cytoplasm. The enzyme catalyses an N-acyl-L-alpha-aminoacyl-tRNA + H2O = an N-acyl-L-amino acid + a tRNA + H(+). Functionally, hydrolyzes ribosome-free peptidyl-tRNAs (with 1 or more amino acids incorporated), which drop off the ribosome during protein synthesis, or as a result of ribosome stalling. In terms of biological role, catalyzes the release of premature peptidyl moieties from peptidyl-tRNA molecules trapped in stalled 50S ribosomal subunits, and thus maintains levels of free tRNAs and 50S ribosomes. This Paraburkholderia xenovorans (strain LB400) protein is Peptidyl-tRNA hydrolase.